Reading from the N-terminus, the 501-residue chain is Cytochrome P450 71B25 (501 aa).

A helical membrane pass occupies residues M1–Y21. Residue C445 coordinates heme.

This sequence belongs to the cytochrome P450 family. The cofactor is heme.

The protein localises to the membrane. This chain is Cytochrome P450 71B25 (CYP71B25), found in Arabidopsis thaliana (Mouse-ear cress).